Here is a 2462-residue protein sequence, read N- to C-terminus: Non-reducing polyketide synthase ausA (2462 aa).

The tract at residues 16 to 253 is N-terminal acylcarrier protein transacylase domain (SAT); the sequence is VFFGPVYPEL…HTADHIPAMK (238 aa). Residues 385-801 enclose the Ketosynthase family 3 (KS3) domain; sequence SAPIAVTGFA…GSNAVIVVKE (417 aa). Residues Cys-550, His-685, and His-724 each act as for beta-ketoacyl synthase activity in the active site. The segment at 904–1208 is malonyl-CoA:ACP transacylase (MAT) domain; it reads LCFGGQTGDT…LPIDLQESTA (305 aa). Ser-991 functions as the For acyl/malonyl transferase activity in the catalytic mechanism. Residues 1274 to 1403 are N-terminal hotdog fold; the sequence is HDDGLLQLVE…GKVLLDPQAA (130 aa). One can recognise a PKS/mFAS DH domain in the interval 1274-1581; it reads HDDGLLQLVE…FTSVSIQSLK (308 aa). Residues 1277–1580 are product template (PT) domain; the sequence is GLLQLVERDA…TFTSVSIQSL (304 aa). The active-site Proton acceptor; for dehydratase activity is His-1307. The interval 1431 to 1581 is C-terminal hotdog fold; the sequence is SSNGLKRATV…FTSVSIQSLK (151 aa). Asp-1489 (proton donor; for dehydratase activity) is an active-site residue. A Carrier domain is found at 1613-1690; sequence VSDDHHLRAV…GLAHRISPSS (78 aa). An O-(pantetheine 4'-phosphoryl)serine modification is found at Ser-1650. Positions 1850–2083 are methyltransferase (CMeT) domain; that stretch reads QHASEHKLLR…GFNWVDWTDN (234 aa). Residues 2112-2462 form a thioesterase (TE) domain region; the sequence is TPARVETVRY…YEFLRQHVAV (351 aa). Active-site for thioesterase activity residues include Ser-2235, Asp-2398, and His-2430.

The catalysed reaction is 3 malonyl-CoA + acetyl-CoA + 2 S-adenosyl-L-methionine = 3,5-dimethylorsellinate + 2 S-adenosyl-L-homocysteine + 3 CO2 + 4 CoA. The protein operates within secondary metabolite biosynthesis; terpenoid biosynthesis. In terms of biological role, non-reducing polyketide synthase; part of the gene cluster that mediates the biosynthesis of calidodehydroaustin, a fungal meroterpenoid. The first step of the pathway is the synthesis of 3,5-dimethylorsellinic acid by the polyketide synthase ausA. 3,5-dimethylorsellinic acid is then prenylated by the polyprenyl transferase ausN. Further epoxidation by the FAD-dependent monooxygenase ausM and cyclization by the probable terpene cyclase ausL lead to the formation of protoaustinoid A. Protoaustinoid A is then oxidized to spiro-lactone preaustinoid A3 by the combined action of the FAD-binding monooxygenases ausB and ausC, and the dioxygenase ausE. Acid-catalyzed keto-rearrangement and ring contraction of the tetraketide portion of preaustinoid A3 by ausJ lead to the formation of preaustinoid A4. The aldo-keto reductase ausK, with the help of ausH, is involved in the next step by transforming preaustinoid A4 into isoaustinone which is in turn hydroxylated by the P450 monooxygenase ausI to form austinolide. The cytochrome P450 monooxygenase ausG modifies austinolide to austinol. Austinol is further acetylated to austin by the O-acetyltransferase ausP, which spontaneously changes to dehydroaustin. The cytochrome P450 monooxygenase ausR then converts dehydroaustin is into 7-dehydrodehydroaustin. The hydroxylation catalyzed by ausR permits the O-acetyltransferase ausQ to add an additional acetyl group to the molecule, leading to the formation of acetoxydehydroaustin. The short chain dehydrogenase ausT catalyzes the reduction of the double bond present between carbon atoms 1 and 2 to convert 7-dehydrodehydroaustin into 1,2-dihydro-7-hydroxydehydroaustin. AusQ catalyzes not only an acetylation reaction but also the addition of the PKS ausV diketide product to 1,2-dihydro-7-hydroxydehydroaustin, forming precalidodehydroaustin. Finally, the iron/alpha-ketoglutarate-dependent dioxygenase converts precalidodehydroaustin into calidodehydroaustin. In Aspergillus calidoustus, this protein is Non-reducing polyketide synthase ausA.